A 418-amino-acid chain; its full sequence is AA14 family lytic polysaccharide monooxygenase B (418 aa).

The first 18 residues, 1 to 18, serve as a signal peptide directing secretion; sequence MIPVFLAAVAAFLPLTSG. Residues Asn-31, Asn-94, and Asn-151 are each glycosylated (N-linked (GlcNAc...) asparagine). Cystine bridges form between Cys-85–Cys-108, Cys-127–Cys-154, Cys-171–Cys-176, and Cys-178–Cys-200. Asn-201 and Asn-235 each carry an N-linked (GlcNAc...) asparagine glycan. A disulfide bridge links Cys-220 with Cys-236. The span at 307–343 shows a compositional bias: low complexity; the sequence is AAATPAPSSSGSSPSSSSPGSSSTASTTSTSGPRPSA. The segment at 307–364 is disordered; sequence AAATPAPSSSGSSPSSSSPGSSSTASTTSTSGPRPSARGFRRSTGERPPTGVPTPRKS.

It belongs to the polysaccharide monooxygenase AA14 family. Cu(2+) serves as cofactor.

The protein localises to the secreted. Functionally, lytic polysaccharide monooxygenase (LPMO) that oxidatively cleaves xylan with both C1 and C4 regioselectivity and that specifically targets the protective shield made by heteroxylans that cover cellulose microfibrils in wood. Catalysis by LPMOs requires the reduction of the active-site copper from Cu(II) to Cu(I) by a reducing agent and H(2)O(2) or O(2) as a cosubstrate. Cleavage occurs only when xylans are bound to cellulose and not when they are in solution. Increases the efficiency of wood saccharification through oxidative cleavage of highly refractory xylan-coated cellulose fibers via synergistic relationship with xylan-active enzymes, xylobiohydrolases and cellobiohydrolases. The chain is AA14 family lytic polysaccharide monooxygenase B from Trametes coccinea (strain BRFM310) (Pycnoporus coccineus).